A 324-amino-acid chain; its full sequence is Aprataxin (324 aa).

In terms of domain architecture, FHA-like spans 23 to 72 (SVTLGRGPDTKIKDKKCSREQVELRADCNRGFVTVKQLGVNPTLVDDVVV). Positions 100 to 160 (TEDTSRSKPS…QGLKASMQDP (61 aa)) are disordered. Over residues 111–125 (RAQQIQSPTKTTADV) the composition is skewed to polar residues. The HIT domain maps to 150-255 (SQGLKASMQD…ISQDFDSPCL (106 aa)). 2 interaction with DNA substrate regions span residues 175–179 (DKYPK) and 237–238 (SM). Positions 240–244 (HVHLH) match the Histidine triad motif motif. H242 serves as the catalytic Tele-AMP-histidine intermediate. The C2H2-type zinc-finger motif lies at 299 to 321 (LRCHVCGKEQTTIPKLKDHLKTH).

Its subcellular location is the nucleus. The protein resides in the nucleoplasm. The protein localises to the nucleolus. It carries out the reaction a 5'-end adenosine-5'-diphospho-5'-2'-deoxyribonucleoside-DNA + H2O = a 5'-end 5'-phospho-2'-deoxyribonucleoside-DNA + AMP + 2 H(+). The catalysed reaction is a 5'-end adenosine-5'-diphospho-5'-ribonucleoside-2'-deoxyribonucleotide-DNA + H2O = a 5'-end 5'-phospho-ribonucleoside-2'-deoxyribonucleotide-DNA + AMP + 2 H(+). The enzyme catalyses a 3'-end 2'-deoxyribonucleotide-3'-diphospho-5'-guanosine-DNA + H2O = a 3'-end 2'-deoxyribonucleotide 3'-phosphate-DNA + GMP + 2 H(+). In terms of biological role, DNA-binding protein involved in single-strand DNA break repair, double-strand DNA break repair and base excision repair. Resolves abortive DNA ligation intermediates formed either at base excision sites, or when DNA ligases attempt to repair non-ligatable breaks induced by reactive oxygen species. Catalyzes the release of adenylate groups covalently linked to 5'-phosphate termini, resulting in the production of 5'-phosphate termini that can be efficiently rejoined. Also able to hydrolyze adenosine 5'-monophosphoramidate (AMP-NH(2)) and diadenosine tetraphosphate (AppppA), but with lower catalytic activity. Likewise, catalyzes the release of 3'-linked guanosine (DNAppG) and inosine (DNAppI) from DNA, but has higher specific activity with 5'-linked adenosine (AppDNA). The sequence is that of Aprataxin (aptx) from Danio rerio (Zebrafish).